A 348-amino-acid polypeptide reads, in one-letter code: MQRLVVWDPVCLPLPPPPPAFKSMEVANFYYEADCLAAAYGGKAAPAAPPADRPGPRPPTGELGSIGEHERAIDFSPYLEPLGAPQAPAPTTASDTFEAAPSAPAPVPASSGQHHDFLSDLFSDDYGGKNCKKAAEYGYVSLGRLGAAKGALHPGCFAPLHPPPPPPPPPAELKAEPGFEPADCKRKEEAGAPGGGAAGMAAGFPYALRAYLGYQAVPSGSSGSLSTSSSSSPPGTPSPADAKATPAAAACYAGAAPAPSQVKSKAKKTVDKHSDEYKIRRERNNIAVRKSRDKAKMRNLETQHKVLELTGENERLQKKVEQLSREVSTLRNLFKTLPEPLLASSGHC.

Residues 1-24 form a required for Lys-174 sumoylation region; that stretch reads MQRLVVWDPVCLPLPPPPPAFKSM. Position 3 is an asymmetric dimethylarginine; by CARM1 (Arg3). The required for MYC transcriptional repression stretch occupies residues 24–135; sequence MEVANFYYEA…YGGKNCKKAA (112 aa). Residue Lys43 is modified to N6-acetyllysine; alternate. Position 43 is an N6-methylated lysine; alternate (Lys43). Disordered regions lie at residues 44–65 and 79–112; these read AAPA…ELGS and LEPL…ASSG. The segment covering 47–59 has biased composition (pro residues); sequence AAPPADRPGPRPP. A 9aaTAD motif is present at residues 116-124; the sequence is DFLSDLFSD. Residues Lys129 and Lys132 each carry the N6-acetyllysine; by KAT2A and KAT2B modification. N6-acetyllysine; by KAT2A and KAT2B; alternate is present on Lys133. Lys133 participates in a covalent cross-link: Glycyl lysine isopeptide (Lys-Gly) (interchain with G-Cter in SUMO2); alternate. The interval 158-178 is disordered; the sequence is APLHPPPPPPPPPAELKAEPG. The span at 160–171 shows a compositional bias: pro residues; sequence LHPPPPPPPPPA. Lys174 is covalently cross-linked (Glycyl lysine isopeptide (Lys-Gly) (interchain with G-Cter in SUMO2); alternate). A Glycyl lysine isopeptide (Lys-Gly) (interchain with G-Cter in SUMO); alternate cross-link involves residue Lys174. Residues Lys185 and Lys187 each participate in a glycyl lysine isopeptide (Lys-Gly) (interchain with G-Cter in SUMO2) cross-link. Residues 219-259 are compositionally biased toward low complexity; sequence SGSSGSLSTSSSSSPPGTPSPADAKATPAAAACYAGAAPAP. Residues 219 to 277 are disordered; the sequence is SGSSGSLSTSSSSSPPGTPSPADAKATPAAAACYAGAAPAPSQVKSKAKKTVDKHSDEY. Thr227 carries the phosphothreonine; by GSK3-beta modification. 2 O-linked (GlcNAc) serine glycosylation sites follow: Ser228 and Ser229. Position 232 is a phosphoserine; by GSK3-beta (Ser232). Position 236 is a phosphothreonine; by RPS6KA1, CDK2 and MAPK (Thr236). Residues Lys263 and Lys265 each participate in a glycyl lysine isopeptide (Lys-Gly) (interchain with G-Cter in SUMO2) cross-link. Positions 268–277 are enriched in basic and acidic residues; that stretch reads KTVDKHSDEY. Thr269 bears the Phosphothreonine; by RPS6KA1 and PKC/PRKCA mark. The region spanning 274-337 is the bZIP domain; the sequence is SDEYKIRRER…STLRNLFKTL (64 aa). Positions 278–298 are basic motif; the sequence is KIRRERNNIAVRKSRDKAKMR. Residue Ser291 is modified to Phosphoserine; by PKC/PRKCA. The tract at residues 300–307 is leucine-zipper; sequence LETQHKVL. At Ser328 the chain carries Phosphoserine; by CaMK2. Lys335 is covalently cross-linked (Glycyl lysine isopeptide (Lys-Gly) (interchain with G-Cter in SUMO2)).

Belongs to the bZIP family. C/EBP subfamily. In terms of assembly, binds DNA as a homodimer and as a heterodimer. Interacts with ATF4. Binds DNA as a heterodimer with ATF4. Interacts with MYB; within the complex, MYB and CEBPB bind to different promoter regions. Can form stable heterodimers with CEBPA, CEBPD and CEBPG. Interacts with SIX1. Interacts with TRIM28 and PTGES2. Interacts with PRDM16. Interacts with CCDC85B. Forms a complex with THOC5. Interacts with ZNF638; this interaction increases transcriptional activation. Interacts with CIDEA and CIDEC; these interactions increase transcriptional activation of a subset of CEBPB downstream target genes. Interacts with DDIT3/CHOP. Interacts with EP300; recruits EP300 to chromatin. Interacts with RORA; the interaction disrupts interaction with EP300. Interacts (not methylated) with MED23, MED26, SMARCA2, SMARCB1 and SMARCC1. Interacts with KAT2A and KAT2B. Interacts with ATF5; EP300 is required for ATF5 and CEBPB interaction and DNA binding. Interacts with NFE2L1; the heterodimer represses expression of DSPP during odontoblast differentiation. Post-translationally, methylated. Methylation at Arg-3 by CARM1 and at Lys-43 by EHMT2 inhibit transactivation activity. Methylation is probably inhibited by phosphorylation at Thr-236. Sumoylated by polymeric chains of SUMO2 or SUMO3. Sumoylation at Lys-174 is required for inhibition of T-cells proliferation. In adipocytes, sumoylation at Lys-174 by PIAS1 leads to ubiquitination and subsequent proteasomal degradation. Desumoylated by SENP2, which abolishes ubiquitination and stabilizes protein levels. In terms of processing, ubiquitinated, leading to proteasomal degradation. Post-translationally, phosphorylated at Thr-236 by MAPK and CDK2, serves to prime phosphorylation at Thr-227 and Ser-232 by GSK3B and acquire DNA-binding as well as transactivation activities, required to induce adipogenesis. MAPK and CDK2 act sequentially to maintain Thr-236 in the primed phosphorylated state during mitotical cloning expansion and thereby progression of terminal differentiation. Phosphorylation at Thr-269 enhances transactivation activity. Phosphorylation at Ser-328 in response to calcium increases transactivation activity. Phosphorylated at Thr-236 by RPS6KA1. O-glycosylated, glycosylation at Ser-228 and Ser-229 prevents phosphorylation on Thr-236, Ser-232 and Thr-227 and DNA binding activity which delays the adipocyte differentiation program. In terms of processing, acetylated. Acetylation at Lys-43 is an important and dynamic regulatory event that contributes to its ability to transactivate target genes, including those associated with adipogenesis and adipocyte function. Deacetylation by HDAC1 represses its transactivation activity. Acetylated by KAT2A and KAT2B within a cluster of lysine residues between amino acids 129-133, this acetylation is strongly induced by glucocorticoid treatment and enhances transactivation activity.

The protein resides in the nucleus. The protein localises to the cytoplasm. Functionally, important transcription factor regulating the expression of genes involved in immune and inflammatory responses. Also plays a significant role in adipogenesis, as well as in the gluconeogenic pathway, liver regeneration, and hematopoiesis. The consensus recognition site is 5'-T[TG]NNGNAA[TG]-3'. Its functional capacity is governed by protein interactions and post-translational protein modifications. During early embryogenesis, plays essential and redundant roles with CEBPA. Has a promitotic effect on many cell types such as hepatocytes and adipocytes but has an antiproliferative effect on T-cells by repressing MYC expression, facilitating differentiation along the T-helper 2 lineage. Binds to regulatory regions of several acute-phase and cytokines genes and plays a role in the regulation of acute-phase reaction and inflammation. Also plays a role in intracellular bacteria killing. During adipogenesis, is rapidly expressed and, after activation by phosphorylation, induces CEBPA and PPARG, which turn on the series of adipocyte genes that give rise to the adipocyte phenotype. The delayed transactivation of the CEBPA and PPARG genes by CEBPB appears necessary to allow mitotic clonal expansion and thereby progression of terminal differentiation. Essential for female reproduction because of a critical role in ovarian follicle development. Restricts osteoclastogenesis: together with NFE2L1; represses expression of DSPP during odontoblast differentiation. The protein is CCAAT/enhancer-binding protein beta (CEBPB) of Bos taurus (Bovine).